Here is a 453-residue protein sequence, read N- to C-terminus: Elongation factor 1-alpha (453 aa).

The region spanning 5–230 (KTHINIVVIG…DAIVEPKRPH (226 aa)) is the tr-type G domain. The segment at 14–21 (GHVDAGKS) is G1. 14–21 (GHVDAGKS) is a GTP binding site. A G2 region spans residues 70-74 (GITID). Residues 91–94 (DAPG) form a G3 region. GTP-binding positions include 91-95 (DAPGH) and 153-156 (NKMD). Residues 153 to 156 (NKMD) are G4. Positions 194-196 (SGW) are G5.

The protein belongs to the TRAFAC class translation factor GTPase superfamily. Classic translation factor GTPase family. EF-Tu/EF-1A subfamily. In terms of assembly, binds to actin.

Its subcellular location is the cytoplasm. In terms of biological role, this protein promotes the GTP-dependent binding of aminoacyl-tRNA to the A-site of ribosomes during protein biosynthesis. It is also an abundant actin filament bundling protein. This is Elongation factor 1-alpha (eef1a2) from Dictyostelium discoideum (Social amoeba).